We begin with the raw amino-acid sequence, 136 residues long: Large ribosomal subunit protein uL16 (136 aa).

It belongs to the universal ribosomal protein uL16 family. Part of the 50S ribosomal subunit.

Binds 23S rRNA and is also seen to make contacts with the A and possibly P site tRNAs. This is Large ribosomal subunit protein uL16 from Sodalis glossinidius (strain morsitans).